Reading from the N-terminus, the 1358-residue chain is Nonribosomal peptide synthetase rstn8 (1358 aa).

A disordered region spans residues 1 to 23; the sequence is MSHSSHYSPVDSGMVPSSSSTED. The adenylation stretch occupies residues 261 to 659; the sequence is YRELDRLSSR…LGEVEYRLHQ (399 aa). Residues 795 to 872 enclose the Carrier domain; the sequence is ETVSPAESTL…DQASLVRPLV (78 aa). Serine 832 is subject to O-(pantetheine 4'-phosphoryl)serine. The condensation stretch occupies residues 909-1322; sequence EDIYPCTPLQ…DDYSQALHEL (414 aa).

This sequence belongs to the NRP synthetase family. Pantetheine 4'-phosphate serves as cofactor.

The catalysed reaction is restrictinol + glycine + H(+) = restricticin + H2O. The protein operates within antifungal biosynthesis. In terms of biological role, nonribosomal peptide synthetase; part of the gene cluster that mediates the biosynthesis of the tetrahydropyranyl antifungal agent restricticin that acts as an inhibitor of CYP51 and blocks the ergosterol biosynthesis. Within the pathway, rstn8 catalyzes the C3 esterification of restrictinol with glycine to yield restricticin. Rstn8 represents an example of the emerging class of single-module NRPS-like enzymes that perform esterification reactions. Rstn8 displays strict substrate specificity toward glycine as no other natural amino acid is accepted. Rstn8 does not recognize desmethylrestrictinol as a substrate, demonstrating that rstn1-catalyzed methylation, possibly protecting the C4-OH, must precede the final esterification step. The highly reducing polyketide synthase rstn3, the short chain dehydrogenase rstn4, the cyclase rstn5, the FAD-dependent monooxygenase rstn6 and the enoylreductase rstn7 are required to generate the first stable intermediate desmethylrestrictinol. Rstn3 with rstn7 biosynthesize the first polyketide chain intermediate that is reduced by rstn4, followed by epoxidation by rstn6 before 6-endo cyclization via epoxide opening by rstn5 leads to desmethylrestrictinol. The methyltransferase rstn1 then catalyzes the C4 O-methylation of desmethylrestrictinol to produce restrictinol, and the nonribosomal peptide synthetase rstn8 catalyzes the C3 esterification of restrictinol with glycine that leads to restricticin. This Aspergillus nomiae NRRL (strain ATCC 15546 / NRRL 13137 / CBS 260.88 / M93) protein is Nonribosomal peptide synthetase rstn8.